The primary structure comprises 102 residues: Parathymosin (102 aa).

The segment at Met-1 to Ala-102 is disordered. An N-acetylserine modification is found at Ser-2. The residue at position 2 (Ser-2) is a Phosphoserine. Position 4 is an N6-acetyllysine (Lys-4). A phosphoserine mark is found at Ser-5 and Ser-13. Positions Ser-13–Val-37 are enriched in basic and acidic residues. Lys-15 carries the post-translational modification N6-acetyllysine. Residues Val-38–Gly-76 show a composition bias toward acidic residues. Thr-52 is modified (phosphothreonine). The residue at position 92 (Lys-92) is an N6-acetyllysine.

It belongs to the pro/parathymosin family.

Its function is as follows. Parathymosin may mediate immune function by blocking the effect of prothymosin alpha which confers resistance to certain opportunistic infections. In Bos taurus (Bovine), this protein is Parathymosin (PTMS).